Consider the following 72-residue polypeptide: Large ribosomal subunit protein uL29 (72 aa).

Belongs to the universal ribosomal protein uL29 family.

This chain is Large ribosomal subunit protein uL29 (rpmC), found in Treponema pallidum (strain Nichols).